A 248-amino-acid polypeptide reads, in one-letter code: MGQKIQPHGLRLGITSDWRSRWYADKQYADYLAEDIKIREFLSEGLERAGIANVVIERTHDRVRVDIHTARPGIVIGRRGSEADRIRGKLEKLTGKQVQLNILEVKNVDANAQLVAQSIAEQLVNRVAFRRAMRKAIQGAMRQPQVKGIKVVCSGRLGGAEMGRTERYHEGRVPLHTLRAEIDYGTHEAHTTFGRIGVKVWIYKGDVVGGRRESLMNARDERPSRGGRRERPRRGGARRQRAEKKQEG.

A KH type-2 domain is found at 38-106; sequence IREFLSEGLE…QVQLNILEVK (69 aa). Residues 214–229 are compositionally biased toward basic and acidic residues; sequence SLMNARDERPSRGGRR. The segment at 214-248 is disordered; sequence SLMNARDERPSRGGRRERPRRGGARRQRAEKKQEG. The span at 230-242 shows a compositional bias: basic residues; sequence ERPRRGGARRQRA.

The protein belongs to the universal ribosomal protein uS3 family. In terms of assembly, part of the 30S ribosomal subunit. Forms a tight complex with proteins S10 and S14.

Binds the lower part of the 30S subunit head. Binds mRNA in the 70S ribosome, positioning it for translation. The chain is Small ribosomal subunit protein uS3 from Corynebacterium urealyticum (strain ATCC 43042 / DSM 7109).